We begin with the raw amino-acid sequence, 111 residues long: PCNA-associated factor (111 aa).

The span at 1-10 (MVRTKANSVP) shows a compositional bias: polar residues. The tract at residues 1-111 (MVRTKANSVP…PPDHTDDEKE (111 aa)) is disordered. The residue at position 8 (Ser8) is a Phosphoserine. Lys15 participates in a covalent cross-link: Glycyl lysine isopeptide (Lys-Gly) (interchain with G-Cter in ubiquitin). The short motif at 23–34 (RKVLGSSTSAAN) is the D-box element. Lys24 bears the N6-acetyllysine; alternate mark. Residue Lys24 forms a Glycyl lysine isopeptide (Lys-Gly) (interchain with G-Cter in ubiquitin); alternate linkage. Residues 27-39 (GSSTSAANSTPLS) are compositionally biased toward polar residues. 3 positions are modified to phosphoserine: Ser28, Ser31, and Ser72. The PIP-box signature appears at 62 to 72 (QKGIGEFFSLS). Positions 74–84 (KDSEKENRIPE) are enriched in basic and acidic residues. The KEN box signature appears at 78–80 (KEN). The Initiation motif signature appears at 85-97 (EAGSSGLGKAKRK).

In terms of assembly, interacts (when monoubiquitinated at Lys-15 and Lys-24) with PCNA. Interacts with isoform 2/p33ING1b of ING1. Interacts with BRCA1. In terms of processing, monoubiquitinated at Lys-15 and Lys-24 during normal S phase, promoting its association with PCNA. Also diubiquitinated at these 2 sites. Following DNA damage, monoubiquitin chains at Lys-15 and Lys-24 are probably extended, leading to disrupt the interaction with PCNA. Polyubiquitinated by the APC/C complex at the mitotic exit, leading to its degradation by the proteasome.

It is found in the nucleus. Its subcellular location is the cytoplasm. It localises to the perinuclear region. Its function is as follows. PCNA-binding protein that acts as a regulator of DNA repair during DNA replication. Following DNA damage, the interaction with PCNA is disrupted, facilitating the interaction between monoubiquitinated PCNA and the translesion DNA synthesis DNA polymerase eta (POLH) at stalled replisomes, facilitating the bypass of replication-fork-blocking lesions. Also acts as a regulator of centrosome number. This is PCNA-associated factor from Bos taurus (Bovine).